Consider the following 390-residue polypeptide: Transforming growth factor beta-1 proprotein (390 aa).

The N-terminal stretch at 1 to 29 is a signal peptide; that stretch reads MPPSGLRLLPLLLPLLWLLMLTPGRPVAG. A straightjacket domain region spans residues 30-74; that stretch reads LSTCKTIDMELVKRKGIEAIRGQILSKLRLASPPSQGDVPPGPLP. Residues 75 to 271 are arm domain; sequence EAILALYNST…ATPLERAQHL (197 aa). Residues N82, N136, and N176 are each glycosylated (N-linked (GlcNAc...) asparagine). A bowtie tail region spans residues 226–252; the sequence is DSKDNTLQVDINGFSSGRRGDLATIHG. A Cell attachment site motif is present at residues 244–246; the sequence is RGD. Disulfide bonds link C285/C294, C293/C356, C322/C387, and C326/C389.

This sequence belongs to the TGF-beta family. Homodimer; disulfide-linked. Interacts with the serine proteases, HTRA1 and HTRA3: the interaction with either inhibits TGFB1-mediated signaling and the HTRA protease activity is required for this inhibition. May interact with THSD4; this interaction may lead to sequestration by FBN1 microfibril assembly and attenuation of TGFB signaling. Interacts with CD109, DPT and ASPN. Interacts with EFEMP2. Interacts with TSKU; the interaction contributes to regulation of the hair cycle. Interacts with TGFBR3. As to quaternary structure, homodimer; disulfide-linked. Interacts with transforming growth factor beta-1 (TGF-beta-1) chain; interaction is non-covalent and maintains TGF-beta-1 in a latent state; each latency-associated peptide (LAP) monomer interacts with TGF-beta-1 in the other monomer. Interacts with LTBP1; leading to regulation of TGF-beta-1 activation. Interacts with LRRC32/GARP; leading to regulation of TGF-beta-1 activation on the surface of activated regulatory T-cells (Tregs). Interacts with LRRC33/NRROS; leading to regulation of TGF-beta-1 activation in macrophages and microglia. Interacts (via cell attachment site) with integrins ITGAV and ITGB6 (ITGAV:ITGB6), leading to release of the active TGF-beta-1. Interacts with NREP; the interaction results in a decrease in TGFB1 autoinduction. Interacts with HSP90AB1; inhibits latent TGFB1 activation. In terms of assembly, homodimer; disulfide-linked. Interacts with TGF-beta receptors (TGFBR1 and TGFBR2), leading to signal transduction. In terms of processing, transforming growth factor beta-1 proprotein: The precursor proprotein is cleaved in the Golgi apparatus by FURIN to form Transforming growth factor beta-1 (TGF-beta-1) and Latency-associated peptide (LAP) chains, which remain non-covalently linked, rendering TGF-beta-1 inactive. Post-translationally, N-glycosylated. Deglycosylation leads to activation of Transforming growth factor beta-1 (TGF-beta-1); mechanisms triggering deglycosylation-driven activation of TGF-beta-1 are however unclear.

Its subcellular location is the secreted. The protein localises to the extracellular space. It is found in the extracellular matrix. Transforming growth factor beta-1 proprotein: Precursor of the Latency-associated peptide (LAP) and Transforming growth factor beta-1 (TGF-beta-1) chains, which constitute the regulatory and active subunit of TGF-beta-1, respectively. Functionally, required to maintain the Transforming growth factor beta-1 (TGF-beta-1) chain in a latent state during storage in extracellular matrix. Associates non-covalently with TGF-beta-1 and regulates its activation via interaction with 'milieu molecules', such as LTBP1, LRRC32/GARP and LRRC33/NRROS, that control activation of TGF-beta-1. Interaction with LRRC33/NRROS regulates activation of TGF-beta-1 in macrophages and microglia. Interaction with LRRC32/GARP controls activation of TGF-beta-1 on the surface of activated regulatory T-cells (Tregs). Interaction with integrins (ITGAV:ITGB6 or ITGAV:ITGB8) results in distortion of the Latency-associated peptide chain and subsequent release of the active TGF-beta-1. Its function is as follows. Multifunctional protein that regulates the growth and differentiation of various cell types and is involved in various processes, such as normal development, immune function, microglia function and responses to neurodegeneration. Activation into mature form follows different steps: following cleavage of the proprotein in the Golgi apparatus, Latency-associated peptide (LAP) and Transforming growth factor beta-1 (TGF-beta-1) chains remain non-covalently linked rendering TGF-beta-1 inactive during storage in extracellular matrix. At the same time, LAP chain interacts with 'milieu molecules', such as LTBP1, LRRC32/GARP and LRRC33/NRROS that control activation of TGF-beta-1 and maintain it in a latent state during storage in extracellular milieus. TGF-beta-1 is released from LAP by integrins (ITGAV:ITGB6 or ITGAV:ITGB8): integrin-binding to LAP stabilizes an alternative conformation of the LAP bowtie tail and results in distortion of the LAP chain and subsequent release of the active TGF-beta-1. Once activated following release of LAP, TGF-beta-1 acts by binding to TGF-beta receptors (TGFBR1 and TGFBR2), which transduce signal. While expressed by many cells types, TGF-beta-1 only has a very localized range of action within cell environment thanks to fine regulation of its activation by Latency-associated peptide chain (LAP) and 'milieu molecules'. Plays an important role in bone remodeling: acts as a potent stimulator of osteoblastic bone formation, causing chemotaxis, proliferation and differentiation in committed osteoblasts. Can promote either T-helper 17 cells (Th17) or regulatory T-cells (Treg) lineage differentiation in a concentration-dependent manner. At high concentrations, leads to FOXP3-mediated suppression of RORC and down-regulation of IL-17 expression, favoring Treg cell development. At low concentrations in concert with IL-6 and IL-21, leads to expression of the IL-17 and IL-23 receptors, favoring differentiation to Th17 cells. Stimulates sustained production of collagen through the activation of CREB3L1 by regulated intramembrane proteolysis (RIP). Mediates SMAD2/3 activation by inducing its phosphorylation and subsequent translocation to the nucleus. Positively regulates odontoblastic differentiation in dental papilla cells, via promotion of IPO7-mediated translocation of phosphorylated SMAD2 to the nucleus and subsequent transcription of target genes. Can induce epithelial-to-mesenchymal transition (EMT) and cell migration in various cell types. This is Transforming growth factor beta-1 proprotein (TGFB1) from Ovis aries (Sheep).